The chain runs to 181 residues: MPRVHVFARDHINTDEIIPARHLTTDIEAELAPYAMEDYDRDFAKRVQPGDIIVAGADFGCGSSREHAVWALRGAGVGAVIAPNFARIYYRNSINNGFLALECDGIVEAFQDGDEANLDLKGGTITNLRTGQTLTFVPVPQFALDVQKAGGWLEYMRAQVPAEADDSSSAQPHPGKENAHA.

It belongs to the LeuD family. LeuD type 2 subfamily. Heterodimer of LeuC and LeuD.

It carries out the reaction (2R,3S)-3-isopropylmalate = (2S)-2-isopropylmalate. It functions in the pathway amino-acid biosynthesis; L-leucine biosynthesis; L-leucine from 3-methyl-2-oxobutanoate: step 2/4. Its function is as follows. Catalyzes the isomerization between 2-isopropylmalate and 3-isopropylmalate, via the formation of 2-isopropylmaleate. The sequence is that of 3-isopropylmalate dehydratase small subunit from Deinococcus deserti (strain DSM 17065 / CIP 109153 / LMG 22923 / VCD115).